The chain runs to 173 residues: ATP-dependent protease subunit HslV (173 aa).

Residue Thr2 is part of the active site. Residues Gly158, Asp161, and Thr164 each contribute to the Na(+) site.

This sequence belongs to the peptidase T1B family. HslV subfamily. As to quaternary structure, a double ring-shaped homohexamer of HslV is capped on each side by a ring-shaped HslU homohexamer. The assembly of the HslU/HslV complex is dependent on binding of ATP.

The protein localises to the cytoplasm. The enzyme catalyses ATP-dependent cleavage of peptide bonds with broad specificity.. Allosterically activated by HslU binding. Protease subunit of a proteasome-like degradation complex believed to be a general protein degrading machinery. This is ATP-dependent protease subunit HslV from Actinobacillus succinogenes (strain ATCC 55618 / DSM 22257 / CCUG 43843 / 130Z).